Consider the following 171-residue polypeptide: Co-chaperone protein HscB homolog (171 aa).

A J domain is found at 3–75 (SHFALFDLEP…SQRARYLLSL (73 aa)).

This sequence belongs to the HscB family. As to quaternary structure, interacts with HscA and stimulates its ATPase activity.

In terms of biological role, co-chaperone involved in the maturation of iron-sulfur cluster-containing proteins. Seems to help targeting proteins to be folded toward HscA. This is Co-chaperone protein HscB homolog from Azotobacter vinelandii.